A 152-amino-acid chain; its full sequence is MDSSPLVRPVETTDSASWLSMRCELWPDGTCQEHQSEIAEFLSGKVARPAAVLIAVAPDGEALGFAELSIRPYAEECYSGNVAFLEGWYVVPSARRQGVGVALVKAAEHWARGRGCTEFASDTQLTNSASTSAHLAAGFTEVAQVRCFRKPL.

The N-acetyltransferase domain occupies P5–L152. Residues W26, Y73, E86, and D122 each contribute to the substrate site. N127 serves as a coordination point for acetyl-CoA.

Homodimer.

The enzyme catalyses kanamycin B + acetyl-CoA = N(6')-acetylkanamycin B + CoA + H(+). In terms of biological role, catalyzes the transfer of an acetyl group from acetyl-CoA to the 6'-amino group of aminoglycoside molecules conferring resistance to antibiotics containing the purpurosamine ring including amikacin. This is Aminoglycoside N(6')-acetyltransferase type 1 (aacA7) from Klebsiella aerogenes (Enterobacter aerogenes).